The sequence spans 71 residues: Protein DP71L (71 aa).

2 important for host CHOP inhibition regions span residues 16–18 (VRF) and 57–61 (LSTVL).

It belongs to the asfivirus DP71L family. Interacts (via C-terminus) with host PPP1CB.

Functionally, interacts with the host phosphatase PP1 catalytic subunit (PPP1CB) and recruits it to dephosphorylate EIF2S1/eIF2alpha and therefore restores the host translation that has been shut-down by the host. Also inhibits the EIF2S1/eIF2alpha-ATF4-DDIT3/CHOP pathway. This chain is Protein DP71L, found in African swine fever virus (strain Badajoz 1971 Vero-adapted) (Ba71V).